The primary structure comprises 43 residues: Protein PsbN (43 aa).

The helical transmembrane segment at 4-24 threads the bilayer; it reads ATIIVIFVSSLLVGITAYSVY.

The protein belongs to the PsbN family.

The protein resides in the plastid. It is found in the chloroplast thylakoid membrane. Its function is as follows. May play a role in photosystem I and II biogenesis. The chain is Protein PsbN from Thalassiosira pseudonana (Marine diatom).